Consider the following 332-residue polypeptide: Melanocortin receptor 4 (332 aa).

Topologically, residues 1–43 (MNSTQPLGMHTSLHSWNRSAHGMPTNVSESLAKGYSDGGCYEQ) are extracellular. N-linked (GlcNAc...) asparagine glycans are attached at residues asparagine 2, asparagine 17, and asparagine 26. 2 disulfides stabilise this stretch: cysteine 40/cysteine 279 and cysteine 271/cysteine 277. The helical transmembrane segment at 44–69 (LFVSPEVFVTLGVISLLENILVIVAI) threads the bilayer. The Cytoplasmic portion of the chain corresponds to 70-81 (AKNKNLHSPMYF). Residues 82–106 (FICSLAVADMLVSVSNGSETIVITL) form a helical membrane-spanning segment. The Ca(2+) site is built by glutamate 100, aspartate 122, and aspartate 126. The Extracellular segment spans residues 107–123 (LNSTDTDAQSFTVDIDN). A helical membrane pass occupies residues 124-145 (VIDSVICSSLLASICSLLSIAV). Residues 146-165 (DRYFTIFYALQYHNIMTVKR) lie on the Cytoplasmic side of the membrane. A helical membrane pass occupies residues 166-186 (VAITISAIWAACTVSGVLFII). Over 187–191 (YSDSS) the chain is Extracellular. The helical transmembrane segment at 192–215 (AVIICLITVFFTMLALMASLYVHM) threads the bilayer. Over 216–248 (FLMARLHIKRIAVLPGSGTIRQGANMKGAITLT) the chain is Cytoplasmic. The chain crosses the membrane as a helical span at residues 249 to 271 (ILIGVFVVCWAPFFLHLIFYISC). The Extracellular portion of the chain corresponds to 272–280 (PQNPYCVCF). The helical transmembrane segment at 281 to 304 (MSHFNLYLILIMCNSIIDPLIYAL) threads the bilayer. Over 305–332 (RSQELRKTFKEIICCSPLGGLCDLSSRY) the chain is Cytoplasmic. Residue cysteine 318 is the site of S-palmitoyl cysteine attachment.

This sequence belongs to the G-protein coupled receptor 1 family. Homodimer; disulfide-linked, also forms higher order oligomers. Interacts with GNAS. Interacts with ATRNL1. Interacts with MGRN1; this interaction competes with GNAS-binding and thus inhibits agonist-induced cAMP production. Interacts with MRAP and MRAP2; these associated factors increase ligand-sensitivity and generation of cAMP.

The protein resides in the cell membrane. Its function is as follows. Hormone receptor that acts as a key component of the leptin-melanocortin pathway at the intersection of homeostatic maintenance of energetic state. Plays a role in regulating food intake: activation by a stimulating hormone such as anorexigenic alpha-melanocyte stimulating hormone (alpha-MSH) inhibits appetite, whereas binding to a natural antagonist like Agouti-related protein/AGRP promotes appetite. G-protein-coupled receptor that activates conventional Galphas signaling leading to induction of anorexogenic signaling in the hypothalamus to result in negative energy balance. Regulates the firing activity of neurons from the hypothalamus by alpha-MSH and AGRP independently of Galphas signaling by ligand-induced coupling of closure of inwardly rectifying potassium channel KCNJ13. In intestinal epithelial cells, plays a role in the inhibition of hepatic glucose production via nesfatin-1/NUCB2 leading to increased cyclic adenosine monophosphate (cAMP) levels and glucagon-like peptide 1 (GLP-1) secretion in the intestinal epithelium. The chain is Melanocortin receptor 4 (MC4R) from Bos taurus (Bovine).